The following is a 347-amino-acid chain: NADH-ubiquinone oxidoreductase chain 2 (347 aa).

The next 10 helical transmembrane spans lie at 3–23 (PMIFIILLATIMLGSSIVMMS), 25–45 (HWFMTWLGFEMNMMAIVPVLM), 59–79 (YFLTQATASMILMLAIIINLM), 96–116 (MLITIALVMKLGLAPFHFWVP), 122–142 (IPLSSGLILLTWQKIAPLSLL), 149–169 (INMELFLTMSLLSIVIGGWGG), 201–221 (SFLNLLVYILMTSSMFALLIF), 239–259 (IIATMSLIILLSLGGLPPLTG), 274–294 (NSTILPTLMAISALLNLFFYI), and 326–346 (ILPLITISTLALPLTPLFLML).

It belongs to the complex I subunit 2 family. As to quaternary structure, core subunit of respiratory chain NADH dehydrogenase (Complex I) which is composed of 45 different subunits. Interacts with TMEM242.

Its subcellular location is the mitochondrion inner membrane. It carries out the reaction a ubiquinone + NADH + 5 H(+)(in) = a ubiquinol + NAD(+) + 4 H(+)(out). Functionally, core subunit of the mitochondrial membrane respiratory chain NADH dehydrogenase (Complex I) that is believed to belong to the minimal assembly required for catalysis. Complex I functions in the transfer of electrons from NADH to the respiratory chain. The immediate electron acceptor for the enzyme is believed to be ubiquinone. This is NADH-ubiquinone oxidoreductase chain 2 from Crocidura hildegardeae (Hildegarde's shrew).